The sequence spans 616 residues: MNRRIVLLPETLTHRIAAGEVVERPASIVKELLENALDSGATDINVELERGGCGLIRVADNGSGIFAQDVTLAFARHATSKIAEFDDLYRVRSFGFRGEALASIASISRTELVTRTADDLAGMRIVVEGGNICEKTEAGCPIGTSITVSRIFDSVPVRKKFLKAEATERAYCLDVITRLSLANPEVRIRVFSKGRELCHYPATSRLSERVALVLGNADADRLQPIEGETDRVRVTGFASRPDFTCATTRQIYTFVNRRHVRDHLLNHAVMTAYRRVIEPRRYPAVVLYVDLDPADVDVNVHPAKLEVRFRQPRTVYEAVVEALSGMLRGMGQSALSLTRYGPAGTAEIGHIPQEDYESRISEALRRYSLASGSRKMMYGTGTEANPVNKKHFLAERIRGEEIHARESLLLSPAPALPQNSFHPVFADLVYLGSLWDSYLIFSVADGMLLIDQHAAHERILFEKIKKAAERNKTAVQVLLIPEILNLSRPDFERFGDVVPLLEQVGIEAEPFGGEEIIIKALPTLLAHLDPGVLVKDLIAECADRGGGLSLQEKGEKIYAYLACRGAVKAGQKLIREEVAQLCRDLDATPFAATCPHGRPVYVLYPLKDIERMFRRR.

The protein belongs to the DNA mismatch repair MutL/HexB family.

Functionally, this protein is involved in the repair of mismatches in DNA. It is required for dam-dependent methyl-directed DNA mismatch repair. May act as a 'molecular matchmaker', a protein that promotes the formation of a stable complex between two or more DNA-binding proteins in an ATP-dependent manner without itself being part of a final effector complex. This Syntrophus aciditrophicus (strain SB) protein is DNA mismatch repair protein MutL.